Reading from the N-terminus, the 88-residue chain is N(2)-fixation sustaining protein CowN (88 aa).

Belongs to the CowN family.

Is required to sustain N(2)-dependent growth in the presence of low levels of carbon monoxide (CO). Probably acts by protecting the N(2) fixation ability of the nitrogenase complex, which is inactivated in the presence of CO. The sequence is that of N(2)-fixation sustaining protein CowN from Rhodomicrobium vannielii (strain ATCC 17100 / DSM 162 / LMG 4299 / NCIMB 10020 / ATH 3.1.1).